Here is a 404-residue protein sequence, read N- to C-terminus: Chorismate synthase (404 aa).

Residues arginine 40 and arginine 46 each contribute to the NADP(+) site. FMN is bound by residues 133–135, 266–267, glycine 313, 328–332, and arginine 354; these read RSS, QA, and KPIPT. The segment at 283–320 is disordered; it reads PGSQVHDPIEPREDGAQAYPRRTNHAGGTEGGTTTGMP. The segment at 337-357 is disordered; that stretch reads LDSVDTATGEPEPTRYERSDI.

Belongs to the chorismate synthase family. As to quaternary structure, homotetramer. FMNH2 is required as a cofactor.

The enzyme catalyses 5-O-(1-carboxyvinyl)-3-phosphoshikimate = chorismate + phosphate. The protein operates within metabolic intermediate biosynthesis; chorismate biosynthesis; chorismate from D-erythrose 4-phosphate and phosphoenolpyruvate: step 7/7. Catalyzes the anti-1,4-elimination of the C-3 phosphate and the C-6 proR hydrogen from 5-enolpyruvylshikimate-3-phosphate (EPSP) to yield chorismate, which is the branch point compound that serves as the starting substrate for the three terminal pathways of aromatic amino acid biosynthesis. This reaction introduces a second double bond into the aromatic ring system. This Salinibacter ruber (strain DSM 13855 / M31) protein is Chorismate synthase.